Consider the following 629-residue polypeptide: MQFHERFDVIVVGGGHAGTEAALASARMGSKTLLLTHNIDTLGQMSCNPAIGGIGKGHLVKEIDALGGAMAVATDFAGIQFRTLNSSKGPAVRATRAQADRALYRHKIQEILQHQANLRIFQQAVDDLVVENGKVVGVVTQMGLAFEAPAVVLTAGTFLGGKIHIGLENYSGGRAGDPPAIALAHRLRELPIRVGRLKTGTPPRIDANTIDFSQMTEQKGDDPLPVMSFIGDVNDHPEQVSCHITHTNERTHDIIRGGLDRSPMYSGIIEGIGPRYCPSIEDKVNRFADKTSHQIFIEPEGLNTTEIYPNGISTSLPFDVQLNLVRSIKGMENAEIMRPGYAIEYDYFDPRDLKNSLETKTIAGLFFAGQINGTTGYEEAGAQGLLAGMNASLQVQGKEAWCPRRDQAYLGVLVDDLSTLGTKEPYRMFTSRAEYRLLLREDNADLRLTEKGRELGLVDDNRWALFSEKMESIETELQRLRGQWVHPNSPLVEALNPHLNTPITREATFEDLLRRPEMDYPKLMSIDGFGPSLEDQRAAEQVQIQVKYSGYIQRQQGEIDKAIRHETTLLPLDLDYQEVPGLSNEVIAKMNEHKPETIGQASRISGMTPAAISILLVHLKKRGLLRKSA.

13–18 (GGGHAG) contributes to the FAD binding site. 273–287 (GPRYCPSIEDKVNRF) lines the NAD(+) pocket.

It belongs to the MnmG family. Homodimer. Heterotetramer of two MnmE and two MnmG subunits. The cofactor is FAD.

The protein localises to the cytoplasm. In terms of biological role, NAD-binding protein involved in the addition of a carboxymethylaminomethyl (cmnm) group at the wobble position (U34) of certain tRNAs, forming tRNA-cmnm(5)s(2)U34. The sequence is that of tRNA uridine 5-carboxymethylaminomethyl modification enzyme MnmG from Shewanella pealeana (strain ATCC 700345 / ANG-SQ1).